The following is a 263-amino-acid chain: Endonuclease 8 (263 aa).

Pro2 serves as the catalytic Schiff-base intermediate with DNA. The active-site Proton donor is the Glu3. Catalysis depends on Lys53, which acts as the Proton donor; for beta-elimination activity. Residues Gln70, Arg125, and Asn169 each contribute to the DNA site. Residues 229–263 (KVFHRDGEPCERCGSIIEKTTLSSRPFYWCPGCQH) form an FPG-type zinc finger. Arg253 acts as the Proton donor; for delta-elimination activity in catalysis.

Belongs to the FPG family. Zn(2+) is required as a cofactor.

The enzyme catalyses 2'-deoxyribonucleotide-(2'-deoxyribose 5'-phosphate)-2'-deoxyribonucleotide-DNA = a 3'-end 2'-deoxyribonucleotide-(2,3-dehydro-2,3-deoxyribose 5'-phosphate)-DNA + a 5'-end 5'-phospho-2'-deoxyribonucleoside-DNA + H(+). Functionally, involved in base excision repair of DNA damaged by oxidation or by mutagenic agents. Acts as a DNA glycosylase that recognizes and removes damaged bases. Has a preference for oxidized pyrimidines, such as thymine glycol, 5,6-dihydrouracil and 5,6-dihydrothymine. Has AP (apurinic/apyrimidinic) lyase activity and introduces nicks in the DNA strand. Cleaves the DNA backbone by beta-delta elimination to generate a single-strand break at the site of the removed base with both 3'- and 5'-phosphates. This Escherichia coli O9:H4 (strain HS) protein is Endonuclease 8.